Consider the following 794-residue polypeptide: MNIDDKLEGLFLKCGGIDEMQSSRAMVVMGGVSGQSTVSGELQESVLQDRSMPHQEILAADEVLQESEMRQQDMISHDELMVHEETVKNDEEQMETHERLPQGLQYALNVPISVKQEITFTDVSEQLMRDKKQIREPVDLQKKKKRKQRSPAKILTINEDGSLGLKTPKSHVCEHCNAAFRTNYHLQRHVFIHTGEKPFQCSQCDMRFIQKYLLQRHEKIHTGEKPFRCDECGMRFIQKYHMERHKRTHSGEKPYQCEYCLQYFSRTDRVLKHKRMCHENHDKKLNRCAIKGGLLTSEEDSGFSTSPKDNSLPKKKRQKTEKKSSGMDKESSLDKSDLKKDKNDYLPLYSSSTKVKDEYMVAEYAVEMPHSSVGGSHLEDASGEIHPPKLVLKKINSKRSLKQPLEQNQTISPLSTYEESKVSKYAFELVDKQALLDSEGNADIDQVDNLQEGPSKPVHSSTNYDDAMQFLKKKRYLQAASNNSREYALNVGTIASQPSVTQAAVASVIDESTTASILDSQALNVEIKSNHDKNVIPDEVLQTLLDHYSHKANGQHEISFSVADTEVTSSISINSSEVPEVTQSENVGSSSQASSSDKANMLQEYSKFLQQALDRTSQNDAYLNSPSLNFVTDNQTLPNQPAFSSIDKQVYATMPINSFRSGMNSPLRTTPDKSHFGLIVGDSQHSFPFSGDETNHASATSTQDFLDQVTSQKKAEAQPVHQAYQMSSFEQPFRAPYHGSRAGIATQFSTANGQVNLRGPGTSAEFPEFPLVNVNDNRAGMTSSPDATTGQTFG.

K6 participates in a covalent cross-link: Glycyl lysine isopeptide (Lys-Gly) (interchain with G-Cter in SUMO2). The residue at position 51 (S51) is a Phosphoserine. Glycyl lysine isopeptide (Lys-Gly) (interchain with G-Cter in SUMO2) cross-links involve residues K88, K115, and K132. The segment at 171–193 (HVCEHCNAAFRTNYHLQRHVFIH) adopts a C2H2-type 1 zinc-finger fold. The residue at position 194 (T194) is a Phosphothreonine. 2 consecutive C2H2-type zinc fingers follow at residues 199 to 221 (FQCSQCDMRFIQKYLLQRHEKIH) and 227 to 249 (FRCDECGMRFIQKYHMERHKRTH). At S250 the chain carries Phosphoserine. The C2H2-type 4 zinc finger occupies 255 to 278 (YQCEYCLQYFSRTDRVLKHKRMCH). A Glycyl lysine isopeptide (Lys-Gly) (interchain with G-Cter in SUMO2) cross-link involves residue K291. A disordered region spans residues 298-338 (EEDSGFSTSPKDNSLPKKKRQKTEKKSSGMDKESSLDKSDL). Phosphoserine is present on residues S301 and S306. K308 is covalently cross-linked (Glycyl lysine isopeptide (Lys-Gly) (interchain with G-Cter in SUMO2)). Basic and acidic residues predominate over residues 321-338 (EKKSSGMDKESSLDKSDL). Residue K356 forms a Glycyl lysine isopeptide (Lys-Gly) (interchain with G-Cter in SUMO1); alternate linkage. A Glycyl lysine isopeptide (Lys-Gly) (interchain with G-Cter in SUMO2); alternate cross-link involves residue K356. Residue K402 forms a Glycyl lysine isopeptide (Lys-Gly) (interchain with G-Cter in SUMO2) linkage. Residue S412 is modified to Phosphoserine. Glycyl lysine isopeptide (Lys-Gly) (interchain with G-Cter in SUMO2) cross-links involve residues K421 and K424. The segment covering 575-588 (SSEVPEVTQSENVG) has biased composition (polar residues). Residues 575–596 (SSEVPEVTQSENVGSSSQASSS) form a disordered region. K607 is subject to N6-acetyllysine. A phosphoserine mark is found at S665 and S784. Residues 775-794 (NDNRAGMTSSPDATTGQTFG) form a disordered region.

This sequence belongs to the krueppel C2H2-type zinc-finger protein family. Interacts with HNRNPDL. Interacts with the 5FMC complex; the interaction requires association with CHTOP. Interacts with CAVIN1. In terms of processing, sumoylated with SUMO2. Desumoylated by SENP3, resulting in the stimulation of transcription of its target genes.

It is found in the nucleus. In terms of biological role, involved in transcriptional regulation. Represses the transcription of a number of genes including gastrin, stromelysin and enolase. Binds to the G-rich box in the enhancer region of these genes. The chain is Zinc finger protein 148 (ZNF148) from Bos taurus (Bovine).